Consider the following 95-residue polypeptide: Protein K6 (95 aa).

The N-terminal stretch at 1–24 (MAPVHVLCCVSVLLATFYLTPTES) is a signal peptide.

In Human herpesvirus 8 type P (isolate GK18) (HHV-8), this protein is Protein K6 (K6).